The chain runs to 321 residues: Glyoxylate/hydroxypyruvate reductase B (321 aa).

Residues Arg237 and Glu266 contribute to the active site. Residue His285 is the Proton donor of the active site.

This sequence belongs to the D-isomer specific 2-hydroxyacid dehydrogenase family. GhrB subfamily. Homodimer.

The protein resides in the cytoplasm. The enzyme catalyses glycolate + NADP(+) = glyoxylate + NADPH + H(+). It catalyses the reaction (R)-glycerate + NAD(+) = 3-hydroxypyruvate + NADH + H(+). It carries out the reaction (R)-glycerate + NADP(+) = 3-hydroxypyruvate + NADPH + H(+). In terms of biological role, catalyzes the NADPH-dependent reduction of glyoxylate and hydroxypyruvate into glycolate and glycerate, respectively. This chain is Glyoxylate/hydroxypyruvate reductase B, found in Erwinia tasmaniensis (strain DSM 17950 / CFBP 7177 / CIP 109463 / NCPPB 4357 / Et1/99).